Consider the following 210-residue polypeptide: Na(+)-translocating NADH-quinone reductase subunit D (210 aa).

Helical transmembrane passes span 14–34, 42–62, 72–92, 96–116, 131–151, and 178–198; these read PIIN…ALAV, LVMT…ISLI, IIVQ…VLQA, AISK…IVMG, FMDG…VGVV, and NGLL…IWLI.

Belongs to the NqrDE/RnfAE family. As to quaternary structure, composed of six subunits; NqrA, NqrB, NqrC, NqrD, NqrE and NqrF.

The protein localises to the cell inner membrane. It carries out the reaction a ubiquinone + n Na(+)(in) + NADH + H(+) = a ubiquinol + n Na(+)(out) + NAD(+). Its function is as follows. NQR complex catalyzes the reduction of ubiquinone-1 to ubiquinol by two successive reactions, coupled with the transport of Na(+) ions from the cytoplasm to the periplasm. NqrA to NqrE are probably involved in the second step, the conversion of ubisemiquinone to ubiquinol. The sequence is that of Na(+)-translocating NADH-quinone reductase subunit D from Shewanella frigidimarina (strain NCIMB 400).